The chain runs to 517 residues: Protein IQ-DOMAIN 13 (517 aa).

Positions 1 to 11 (MGKKGSWFSAI) are calmodulin-binding. Disordered regions lie at residues 1–60 (MGKK…FLPI) and 81–147 (VFRP…PRAV). The segment covering 40–49 (KKKKGFGKKL) has biased composition (basic residues). The segment covering 89–99 (DRANSSSTSVA) has biased composition (polar residues). The span at 134-144 (PKPPSPKPPSP) shows a compositional bias: pro residues. 2 consecutive IQ domains span residues 168 to 196 (KNAY…GLVR) and 197 to 218 (LQGV…KYMQ). Disordered regions lie at residues 324-407 (QPFR…LTSC) and 425-452 (KLRA…SSFP). Residues 328-342 (LTPTRPSLSPQPQSS) are compositionally biased toward low complexity. A compositionally biased stretch (polar residues) spans 343–367 (NQNHFRLNNSFDTSTPNSSKSTFVT). Residues 432 to 448 (PKERMDRTPVSTNEKRR) are compositionally biased toward basic and acidic residues.

This sequence belongs to the IQD family. In terms of assembly, binds to multiple calmodulin (CaM) in the presence of Ca(2+) and CaM-like proteins. In terms of tissue distribution, expressed in vessels of roots, cotyledons and leaves, as well as in trichomes.

It localises to the cell membrane. Its subcellular location is the cytoplasm. The protein localises to the cytoskeleton. May be involved in cooperative interactions with calmodulins or calmodulin-like proteins. Recruits calmodulin proteins to microtubules, thus being a potential scaffold in cellular signaling and trafficking. Regulates the formation of oval xylem secondary cell-wall deposition pits through microtubule-dependent lateral inhibition of Rho GTPase domains, thus confining the area of active ROP domains within the lattice of the cortical microtubules. May associate with nucleic acids and regulate gene expression at the transcriptional or post-transcriptional level. The polypeptide is Protein IQ-DOMAIN 13 (Arabidopsis thaliana (Mouse-ear cress)).